The sequence spans 156 residues: Small ribosomal subunit protein uS7 (156 aa).

The protein belongs to the universal ribosomal protein uS7 family. Part of the 30S ribosomal subunit. Contacts proteins S9 and S11.

In terms of biological role, one of the primary rRNA binding proteins, it binds directly to 16S rRNA where it nucleates assembly of the head domain of the 30S subunit. Is located at the subunit interface close to the decoding center, probably blocks exit of the E-site tRNA. This chain is Small ribosomal subunit protein uS7, found in Burkholderia ambifaria (strain MC40-6).